The chain runs to 591 residues: Aspartate--tRNA(Asp/Asn) ligase (591 aa).

Glu-176 lines the L-aspartate pocket. An aspartate region spans residues 200 to 203 (QLFK). Arg-222 contributes to the L-aspartate binding site. ATP contacts are provided by residues 222 to 224 (RDE) and Gln-231. His-450 is an L-aspartate binding site. Glu-484 serves as a coordination point for ATP. Position 491 (Arg-491) interacts with L-aspartate. 536–539 (GLDR) provides a ligand contact to ATP.

This sequence belongs to the class-II aminoacyl-tRNA synthetase family. Type 1 subfamily. As to quaternary structure, homodimer.

Its subcellular location is the cytoplasm. It catalyses the reaction tRNA(Asx) + L-aspartate + ATP = L-aspartyl-tRNA(Asx) + AMP + diphosphate. Its function is as follows. Aspartyl-tRNA synthetase with relaxed tRNA specificity since it is able to aspartylate not only its cognate tRNA(Asp) but also tRNA(Asn). Reaction proceeds in two steps: L-aspartate is first activated by ATP to form Asp-AMP and then transferred to the acceptor end of tRNA(Asp/Asn). This chain is Aspartate--tRNA(Asp/Asn) ligase, found in Bacillus anthracis (strain CDC 684 / NRRL 3495).